A 318-amino-acid polypeptide reads, in one-letter code: ATP phosphoribosyltransferase regulatory subunit (318 aa).

The protein belongs to the class-II aminoacyl-tRNA synthetase family. HisZ subfamily. As to quaternary structure, heteromultimer composed of HisG and HisZ subunits.

Its subcellular location is the cytoplasm. It participates in amino-acid biosynthesis; L-histidine biosynthesis; L-histidine from 5-phospho-alpha-D-ribose 1-diphosphate: step 1/9. Its function is as follows. Required for the first step of histidine biosynthesis. May allow the feedback regulation of ATP phosphoribosyltransferase activity by histidine. In Lactococcus lactis subsp. cremoris (strain SK11), this protein is ATP phosphoribosyltransferase regulatory subunit.